Consider the following 200-residue polypeptide: Potassium-transporting ATPase KdpC subunit (200 aa).

A helical transmembrane segment spans residues 7 to 27 (PALVMIVLFTILTGLIYPLAM).

The protein belongs to the KdpC family. As to quaternary structure, the system is composed of three essential subunits: KdpA, KdpB and KdpC.

The protein localises to the cell inner membrane. In terms of biological role, part of the high-affinity ATP-driven potassium transport (or Kdp) system, which catalyzes the hydrolysis of ATP coupled with the electrogenic transport of potassium into the cytoplasm. This subunit acts as a catalytic chaperone that increases the ATP-binding affinity of the ATP-hydrolyzing subunit KdpB by the formation of a transient KdpB/KdpC/ATP ternary complex. The chain is Potassium-transporting ATPase KdpC subunit from Methylocella silvestris (strain DSM 15510 / CIP 108128 / LMG 27833 / NCIMB 13906 / BL2).